The sequence spans 396 residues: Phosphoglycerate kinase (396 aa).

Substrate contacts are provided by residues 21–23 (DLN), arginine 36, 59–62 (HFGR), arginine 118, and arginine 151. Residues lysine 201, glutamate 323, and 353 to 356 (GGDT) each bind ATP.

It belongs to the phosphoglycerate kinase family. As to quaternary structure, monomer.

It is found in the cytoplasm. The enzyme catalyses (2R)-3-phosphoglycerate + ATP = (2R)-3-phospho-glyceroyl phosphate + ADP. The protein operates within carbohydrate degradation; glycolysis; pyruvate from D-glyceraldehyde 3-phosphate: step 2/5. This is Phosphoglycerate kinase from Brucella abortus biovar 1 (strain 9-941).